Here is a 153-residue protein sequence, read N- to C-terminus: ORM1-like protein 1 (153 aa).

The Cytoplasmic segment spans residues Met-1–Ala-27. Helical transmembrane passes span Leu-28–Pro-46 and Val-47–Met-64. Over His-65–Ser-105 the chain is Cytoplasmic. A run of 2 helical transmembrane segments spans residues Pro-106 to His-123 and Phe-124 to Pro-140. At Gln-141–Tyr-153 the chain is on the cytoplasmic side.

The protein belongs to the ORM family. Ceramide-sensitive subunit of the serine palmitoyltransferase (SPT) complex, which is also composed of SPTLC1, SPTLC2/3 and SPTSSA/B.

The protein resides in the endoplasmic reticulum membrane. Its function is as follows. Plays an essential role in the homeostatic regulation of sphingolipid de novo biosynthesis by modulating the activity of the serine palmitoyltransferase (SPT) in response to ceramide levels. When complexed to SPT, the binding of ceramides to its N-terminus stabilizes a conformation that block SPT substrate entry, hence preventing SPT catalytic activity. Through this mechanism, maintains ceramide levels at sufficient concentrations for the production of complex sphingolipids, but which prevents the accumulation of ceramides to levels that trigger apoptosis. This Danio rerio (Zebrafish) protein is ORM1-like protein 1 (ormdl1).